The primary structure comprises 166 residues: UPF0304 protein VF_1794 (166 aa).

This sequence belongs to the UPF0304 family.

This chain is UPF0304 protein VF_1794, found in Aliivibrio fischeri (strain ATCC 700601 / ES114) (Vibrio fischeri).